We begin with the raw amino-acid sequence, 344 residues long: Holliday junction branch migration complex subunit RuvB (344 aa).

The large ATPase domain (RuvB-L) stretch occupies residues 4–194 (CLLRFCYNSL…FGITGHMEYY (191 aa)). ATP-binding positions include Leu33, Arg34, Gly75, Lys78, Thr79, Thr80, 141-143 (EDF), Arg184, Tyr194, and Arg231. Thr79 serves as a coordination point for Mg(2+). The tract at residues 195–265 (TDIDLTEIVE…ITDKALTMLD (71 aa)) is small ATPAse domain (RuvB-S). The tract at residues 268-344 (HEGLDYVDQK…YEHLGYRYTE (77 aa)) is head domain (RuvB-H). Residues Arg304, Arg323, Arg325, and Arg328 each contribute to the DNA site.

This sequence belongs to the RuvB family. In terms of assembly, homohexamer. Forms an RuvA(8)-RuvB(12)-Holliday junction (HJ) complex. HJ DNA is sandwiched between 2 RuvA tetramers; dsDNA enters through RuvA and exits via RuvB. An RuvB hexamer assembles on each DNA strand where it exits the tetramer. Each RuvB hexamer is contacted by two RuvA subunits (via domain III) on 2 adjacent RuvB subunits; this complex drives branch migration. In the full resolvosome a probable DNA-RuvA(4)-RuvB(12)-RuvC(2) complex forms which resolves the HJ.

It is found in the cytoplasm. It carries out the reaction ATP + H2O = ADP + phosphate + H(+). Its function is as follows. The RuvA-RuvB-RuvC complex processes Holliday junction (HJ) DNA during genetic recombination and DNA repair, while the RuvA-RuvB complex plays an important role in the rescue of blocked DNA replication forks via replication fork reversal (RFR). RuvA specifically binds to HJ cruciform DNA, conferring on it an open structure. The RuvB hexamer acts as an ATP-dependent pump, pulling dsDNA into and through the RuvAB complex. RuvB forms 2 homohexamers on either side of HJ DNA bound by 1 or 2 RuvA tetramers; 4 subunits per hexamer contact DNA at a time. Coordinated motions by a converter formed by DNA-disengaged RuvB subunits stimulates ATP hydrolysis and nucleotide exchange. Immobilization of the converter enables RuvB to convert the ATP-contained energy into a lever motion, pulling 2 nucleotides of DNA out of the RuvA tetramer per ATP hydrolyzed, thus driving DNA branch migration. The RuvB motors rotate together with the DNA substrate, which together with the progressing nucleotide cycle form the mechanistic basis for DNA recombination by continuous HJ branch migration. Branch migration allows RuvC to scan DNA until it finds its consensus sequence, where it cleaves and resolves cruciform DNA. The chain is Holliday junction branch migration complex subunit RuvB from Streptococcus mutans serotype c (strain ATCC 700610 / UA159).